Reading from the N-terminus, the 481-residue chain is Glutamine synthetase (481 aa).

The 85-residue stretch at 22 to 106 (NEVEFVDFRF…VFCDVYDVYK (85 aa)) folds into the GS beta-grasp domain. The region spanning 114–481 (PRSIAKKALK…PFEFITTYSC (368 aa)) is the GS catalytic domain. Mg(2+) is bound by residues E139, E141, E223, and E230. L-glutamate-binding positions include 274 to 275 (NG) and G275. H279 is a binding site for Mg(2+). Residues 281-283 (HVS) and S283 each bind ATP. Positions 331, 337, and 349 each coordinate L-glutamate. Residues R349 and R354 each contribute to the ATP site. E367 provides a ligand contact to Mg(2+). R369 serves as a coordination point for L-glutamate.

Belongs to the glutamine synthetase family. Oligomer of 12 subunits arranged in the form of two hexameric ring. The cofactor is Mg(2+).

The protein resides in the cytoplasm. It catalyses the reaction L-glutamate + NH4(+) + ATP = L-glutamine + ADP + phosphate + H(+). With respect to regulation, the activity of this enzyme could be controlled by adenylation under conditions of abundant glutamine. In terms of biological role, catalyzes the ATP-dependent biosynthesis of glutamine from glutamate and ammonia. This chain is Glutamine synthetase, found in Helicobacter pylori (strain J99 / ATCC 700824) (Campylobacter pylori J99).